Here is a 636-residue protein sequence, read N- to C-terminus: Fructose-1,6-bisphosphatase class 3 (636 aa).

Belongs to the FBPase class 3 family. Mn(2+) is required as a cofactor.

The catalysed reaction is beta-D-fructose 1,6-bisphosphate + H2O = beta-D-fructose 6-phosphate + phosphate. The protein operates within carbohydrate biosynthesis; gluconeogenesis. The polypeptide is Fructose-1,6-bisphosphatase class 3 (Streptococcus gordonii (strain Challis / ATCC 35105 / BCRC 15272 / CH1 / DL1 / V288)).